A 434-amino-acid chain; its full sequence is Lipoyl synthase, mitochondrial (434 aa).

Residues 1 to 31 (MAASARGLRTLQSAHSSTTVPRLQLAVSRCY) constitute a mitochondrion transit peptide. Residues 34–54 (TTSPDPPITNSSNSSNSTPTP) show a composition bias toward low complexity. The segment at 34 to 55 (TTSPDPPITNSSNSSNSTPTPK) is disordered. Positions 144, 149, 155, 175, 179, 182, and 390 each coordinate [4Fe-4S] cluster. Positions 158–379 (GSSKSAATAT…KERALEMGFL (222 aa)) constitute a Radical SAM core domain.

It belongs to the radical SAM superfamily. Lipoyl synthase family. [4Fe-4S] cluster serves as cofactor.

It is found in the mitochondrion. The enzyme catalyses [[Fe-S] cluster scaffold protein carrying a second [4Fe-4S](2+) cluster] + N(6)-octanoyl-L-lysyl-[protein] + 2 oxidized [2Fe-2S]-[ferredoxin] + 2 S-adenosyl-L-methionine + 4 H(+) = [[Fe-S] cluster scaffold protein] + N(6)-[(R)-dihydrolipoyl]-L-lysyl-[protein] + 4 Fe(3+) + 2 hydrogen sulfide + 2 5'-deoxyadenosine + 2 L-methionine + 2 reduced [2Fe-2S]-[ferredoxin]. It functions in the pathway protein modification; protein lipoylation via endogenous pathway; protein N(6)-(lipoyl)lysine from octanoyl-[acyl-carrier-protein]: step 2/2. Its function is as follows. Catalyzes the radical-mediated insertion of two sulfur atoms into the C-6 and C-8 positions of the octanoyl moiety bound to the lipoyl domains of lipoate-dependent enzymes, thereby converting the octanoylated domains into lipoylated derivatives. The sequence is that of Lipoyl synthase, mitochondrial from Paracoccidioides brasiliensis (strain Pb03).